The primary structure comprises 83 residues: Urotensin-2 (83 aa).

Positions E49–F71 are excised as a propeptide. C77 and C82 are joined by a disulfide.

It belongs to the urotensin-2 family.

It is found in the secreted. Urotensin is found in the teleost caudal neurosecretory system. It has a suggested role in osmoregulation and as a corticotropin-releasing factor. The non-hormonal portion of this precursor may be a urotensin binding protein, urophysin. This Platichthys flesus (European flounder) protein is Urotensin-2.